A 602-amino-acid polypeptide reads, in one-letter code: Glutamyl-tRNA(Gln) amidotransferase subunit B, mitochondrial (602 aa).

The N-terminal 56 residues, 1–56 (MFRSCLRHCRRATVRSRTCPRCSHHEIPQLQVVQRQISLSSSFPHIRRLQTSSTDT), are a transit peptide targeting the mitochondrion.

It belongs to the GatB/GatE family. GatB subfamily. Subunit of the heterotrimeric GatCAB amidotransferase (AdT) complex, composed of A, B and C subunits.

It is found in the mitochondrion. It carries out the reaction L-glutamyl-tRNA(Gln) + L-glutamine + ATP + H2O = L-glutaminyl-tRNA(Gln) + L-glutamate + ADP + phosphate + H(+). Allows the formation of correctly charged Gln-tRNA(Gln) through the transamidation of misacylated Glu-tRNA(Gln) in the mitochondria. The reaction takes place in the presence of glutamine and ATP through an activated gamma-phospho-Glu-tRNA(Gln). This Emericella nidulans (strain FGSC A4 / ATCC 38163 / CBS 112.46 / NRRL 194 / M139) (Aspergillus nidulans) protein is Glutamyl-tRNA(Gln) amidotransferase subunit B, mitochondrial (nempA).